The chain runs to 310 residues: Tagatose-6-phosphate kinase (310 aa).

This sequence belongs to the carbohydrate kinase PfkB family. LacC subfamily.

It catalyses the reaction D-tagatofuranose 6-phosphate + ATP = D-tagatofuranose 1,6-bisphosphate + ADP + H(+). Its pathway is carbohydrate metabolism; D-tagatose 6-phosphate degradation; D-glyceraldehyde 3-phosphate and glycerone phosphate from D-tagatose 6-phosphate: step 1/2. In Streptococcus agalactiae serotype V (strain ATCC BAA-611 / 2603 V/R), this protein is Tagatose-6-phosphate kinase.